The sequence spans 751 residues: Myb-related protein A (751 aa).

A disordered region spans residues 1-22 (MAKRSRSEDEDDDLQYADHDYE). HTH myb-type domains lie at 30–81 (KKLW…QKVL), 82–137 (NPEL…NPEV), and 138–188 (KKSS…RRKV). DNA-binding regions (H-T-H motif) lie at residues 58-81 (WTLI…QKVL), 110-133 (WSLI…HNHL), and 161-184 (WAEI…NSTM). K199 participates in a covalent cross-link: Glycyl lysine isopeptide (Lys-Gly) (interchain with G-Cter in SUMO2). Positions 230–294 (IPGYQYVSPD…RLPPQPGSFS (65 aa)) are transcriptional activation domain. The interval 297–552 (SGSFLMDDSM…IRRSILGTTP (256 aa)) is negative regulatory domain. The residue at position 393 (K393) is an N6-acetyllysine. Glycyl lysine isopeptide (Lys-Gly) (interchain with G-Cter in SUMO2) cross-links involve residues K591 and K601.

As to quaternary structure, component of the DREAM complex (also named LINC complex) at least composed of E2F4, E2F5, LIN9, LIN37, LIN52, LIN54, MYBL1, MYBL2, RBL1, RBL2, RBBP4, TFDP1 and TFDP2. The complex exists in quiescent cells where it represses cell cycle-dependent genes. It dissociates in S phase when LIN9, LIN37, LIN52 and LIN54 form a subcomplex that binds to MYBL2. In terms of tissue distribution, predominantly in the testis. Very low levels in the ovaries, spleen and brain.

The protein resides in the nucleus. Its function is as follows. Transcription factor that specifically recognizes the sequence 5'-YAAC[GT]G-3'. Acts as a master regulator of male meiosis by promoting expression of piRNAs: activates expression of both piRNA precursor RNAs and expression of protein-coding genes involved in piRNA metabolism, such as PIWIL1. The piRNA metabolic process mediates the repression of transposable elements during meiosis by forming complexes composed of piRNAs and Piwi proteins and governs the methylation and subsequent repression of transposons, which is essential for the germline integrity. Transcriptional activator of SOX30. In Mus musculus (Mouse), this protein is Myb-related protein A (Mybl1).